Consider the following 284-residue polypeptide: Bifunctional protein FolD (284 aa).

NADP(+)-binding positions include 164–166 (GRS) and S189.

The protein belongs to the tetrahydrofolate dehydrogenase/cyclohydrolase family. Homodimer.

It carries out the reaction (6R)-5,10-methylene-5,6,7,8-tetrahydrofolate + NADP(+) = (6R)-5,10-methenyltetrahydrofolate + NADPH. The catalysed reaction is (6R)-5,10-methenyltetrahydrofolate + H2O = (6R)-10-formyltetrahydrofolate + H(+). It functions in the pathway one-carbon metabolism; tetrahydrofolate interconversion. Its function is as follows. Catalyzes the oxidation of 5,10-methylenetetrahydrofolate to 5,10-methenyltetrahydrofolate and then the hydrolysis of 5,10-methenyltetrahydrofolate to 10-formyltetrahydrofolate. This is Bifunctional protein FolD from Listeria innocua serovar 6a (strain ATCC BAA-680 / CLIP 11262).